Reading from the N-terminus, the 652-residue chain is Translation factor guf1, mitochondrial (652 aa).

The transit peptide at 1–44 (MSIFRLSRTFSLETCLKSSSFKIRWRFFSVSYASRKLASEDNKP) directs the protein to the mitochondrion. The tr-type G domain occupies 56–237 (NRVRNWAVIA…EIIQKIPPPK (182 aa)). Residues 65–72 (AHIDHGKS), 130–134 (DTPGH), and 184–187 (NKVD) contribute to the GTP site.

The protein belongs to the TRAFAC class translation factor GTPase superfamily. Classic translation factor GTPase family. LepA subfamily.

It is found in the mitochondrion inner membrane. It catalyses the reaction GTP + H2O = GDP + phosphate + H(+). In terms of biological role, promotes mitochondrial protein synthesis. May act as a fidelity factor of the translation reaction, by catalyzing a one-codon backward translocation of tRNAs on improperly translocated ribosomes. Binds to mitochondrial ribosomes in a GTP-dependent manner. The polypeptide is Translation factor guf1, mitochondrial (guf1) (Schizosaccharomyces pombe (strain 972 / ATCC 24843) (Fission yeast)).